A 405-amino-acid chain; its full sequence is Deoxyguanosinetriphosphate triphosphohydrolase-like protein (405 aa).

Positions 75-219 constitute an HD domain; it reads RLTHTIEVAQ…AAIADDIAYN (145 aa).

Belongs to the dGTPase family. Type 2 subfamily.

The chain is Deoxyguanosinetriphosphate triphosphohydrolase-like protein from Rhizobium meliloti (strain 1021) (Ensifer meliloti).